A 418-amino-acid chain; its full sequence is Metal tolerance protein 1 (418 aa).

Over 1–56 (MDSHNSAPPQIAEVRMDISSSTSVAAGNKVCRGAACDFSDSSNSSKDARERMASMR) the chain is Cytoplasmic. Residues 57–77 (KLIIAVILCIIFMAVEVVGGI) form a helical membrane-spanning segment. The Vacuolar portion of the chain corresponds to 78 to 89 (KANSLAILTDAA). Residues 90-110 (HLLSDVAAFAISLFSLWAAGW) form a helical membrane-spanning segment. The Cytoplasmic segment spans residues 111–122 (EATPQQSYGFFR). A helical membrane pass occupies residues 123 to 143 (IEILGALVSIQLIWLLAGILV). Residues 144–160 (YEAIVRLINESGEVQGS) lie on the Vacuolar side of the membrane. Residues 161–181 (LMFAVSAFGLFVNIIMAVLLG) form a helical membrane-spanning segment. Positions 182–246 (HDHGHGHGHG…HHPGTGHHHH (65 aa)) are required for zinc-binding. Residues 182–282 (HDHGHGHGHG…RRNINVHSAY (101 aa)) lie on the Cytoplasmic side of the membrane. A disordered region spans residues 186–248 (HGHGHGHGHG…PGTGHHHHDA (63 aa)). Residues 196-227 (HSHDHDHGGSDHDHHHHEDQEHGHVHHHEDGH) show a composition bias toward basic and acidic residues. The span at 235–245 (LHHHPGTGHHH) shows a compositional bias: basic residues. Residues 283-303 (LHVLGDSIQSIGVMIGGAIIW) form a helical membrane-spanning segment. The Vacuolar portion of the chain corresponds to 304–307 (YKPE). Residues 308-328 (WKIIDLICTLIFSVIVLFTTI) traverse the membrane as a helical segment. Residues 329–418 (KMLRNILEVL…SHVTIQIERE (90 aa)) lie on the Cytoplasmic side of the membrane.

The protein belongs to the cation diffusion facilitator (CDF) transporter (TC 2.A.4) family. SLC30A subfamily.

Its subcellular location is the vacuole membrane. In terms of biological role, involved in sequestration of excess zinc in the cytoplasm into vacuoles to maintain zinc homeostasis. The chain is Metal tolerance protein 1 (MTP1) from Oryza sativa subsp. japonica (Rice).